The sequence spans 188 residues: Ribose 1,5-bisphosphate phosphokinase PhnN (188 aa).

9–16 (GPSGAGKD) lines the ATP pocket.

Belongs to the ribose 1,5-bisphosphokinase family.

The catalysed reaction is alpha-D-ribose 1,5-bisphosphate + ATP = 5-phospho-alpha-D-ribose 1-diphosphate + ADP. It functions in the pathway metabolic intermediate biosynthesis; 5-phospho-alpha-D-ribose 1-diphosphate biosynthesis; 5-phospho-alpha-D-ribose 1-diphosphate from D-ribose 5-phosphate (route II): step 3/3. Catalyzes the phosphorylation of ribose 1,5-bisphosphate to 5-phospho-D-ribosyl alpha-1-diphosphate (PRPP). In Pectobacterium parmentieri (strain WPP163) (Pectobacterium wasabiae (strain WPP163)), this protein is Ribose 1,5-bisphosphate phosphokinase PhnN.